A 1269-amino-acid polypeptide reads, in one-letter code: MIAYKQKKTKKKRVLSTGQLSTDVTTSEMGLKSINSNAILDPDYIKELVNDIRKFSHMLLYLKEAILSECFKEVIHIRLDELLRVLKSVMNKHQNLNSVDLQNAAEMLIAKVKAVNFTEVNEENKNDLFREVFSSIETLAFTFGNILTNFLMGDVGNDSLLRLPVSQESKSFESVSVESVDSSNEKGSFSPIELDSMLLKNTNSVELALSYAKTWSKYTKNIVSWVEKKLNLELESTRNIVKLAEATRTNIGLQEFMPLQSLFTNALLNDIESSHLLQQTIAALQANKFVQPLLGRKNEMEKQRKEIKELWKQEQNKMLETETALKKAKLLCMQRQDEYEKAKSSMFRAEEEHLSSSSGLVKNLNRQLEKKRRLEEEALQKVEEANELYKVCVTNVEERRNDLENTKREILTQLRKLVFQCDLTLKAVTVNLFQMQQLQAASLSSNLQSLCDSAKLYDPGQEYSEFVRATNSAEEEKVDGNVNKQLSSPPISGYGPSDSLEDVVRLPDSSNKMEEDRCSNSADITGPSFLRSWTFGMFSDSESTGGSSESRSLDSESISPGDFHRKLPRTPSSGTMSSADDLDEREPPSPSEAGPNSLGTFKKTLMSKAALTHKFRKLRSPTKCRDCEGIVVFHGVECEECLLVCHRKCLENLVIICGHQKLMGKIHLFGAEFTQVAKKEPDGIPFVLKMCASEIENRALSLQGIYRVCGNKIKTEKLCQALENGMHLVDISEFSSHDICDVLKLYLRQLPEPFILFRLYKEFIDLAVEIQHVNEEQEMKKDNPEDKKWPSSSIEISRILLKSKDLLRQLPASNFNSLHYLIVHLKRVVDHSEENKMNSRNLGVIFGPSLLRPRPTTAPITISSLADYSNQARLVEFLITYSQKIFDGSLQPQDSAVGSAGGIAPQVDPGYLPKSLLSPEERDPERSMKSLFFSSKEDIQTTDSECKSFESTPSFEESERKQNALEKCDAYLIDNKGRLLVDQELESASRKTEDACKTSKLPTLKSDREINGVERHLPRTRIRPVSLPIDRLLLLASSPTERNGRNMGNVNSDKLCKNPVFEGVNRKDSPTVVCSKFDGFDQQTLQKTREKQYEQNDHTAKTGMIVPSAFQERGVALNIRSSGDHPVSITQPSKPYTEPVRSTRQVSERRSSDSCPPASVRTPRTLQPQHWTTFYKPPAPAASGRGDEEKPVTPSVAVPPGTTHAPQEHVLKSVPGSENASAGPVHPVSRPEEKAEERDQPDVPTACQRPRLKRMQQFEDLEDEIPQFV.

Phosphoserine occurs at positions 171, 176, 179, and 190. The F-BAR domain occupies 192 to 462 (IELDSMLLKN…SAKLYDPGQE (271 aa)). Residues 296-418 (RKNEMEKQRK…EILTQLRKLV (123 aa)) adopt a coiled-coil conformation. 2 disordered regions span residues 472–523 (SAEE…NSAD) and 540–599 (DSES…NSLG). 3 positions are modified to phosphoserine: Ser499, Ser519, and Ser552. Low complexity predominate over residues 540–559 (DSESTGGSSESRSLDSESIS). The Phorbol-ester/DAG-type zinc-finger motif lies at 612-657 (THKFRKLRSPTKCRDCEGIVVFHGVECEECLLVCHRKCLENLVIIC). One can recognise a Rho-GAP domain in the interval 671-886 (AEFTQVAKKE…FLITYSQKIF (216 aa)). Positions 909–936 (PGYLPKSLLSPEERDPERSMKSLFFSSK) are disordered. Phosphoserine is present on Ser918. The segment covering 919-928 (PEERDPERSM) has biased composition (basic and acidic residues). 2 positions are modified to phosphoserine: Ser954 and Ser1026. The disordered stretch occupies residues 1120 to 1269 (RSSGDHPVSI…DLEDEIPQFV (150 aa)). A compositionally biased stretch (polar residues) spans 1128–1145 (SITQPSKPYTEPVRSTRQ). 2 positions are modified to phosphoserine: Ser1152 and Ser1154. Residues 1162 to 1172 (TPRTLQPQHWT) show a composition bias toward polar residues. Over residues 1229–1241 (SRPEEKAEERDQP) the composition is skewed to basic and acidic residues. Residues 1259-1269 (EDLEDEIPQFV) show a composition bias toward acidic residues. The segment at 1266-1269 (PQFV) is interaction with PTPN13/PTPL1.

In terms of assembly, interacts with PTPN13/PTPL1. Interacts with RAP2A via its coiled coil domain. Interacts with RASIP1.

GTPase activator for the Rho-type GTPases by converting them to an inactive GDP-bound state. Has strong activity toward RHOA, and weaker activity toward RAC1 and CDC42. May act as a specific effector of RAP2A to regulate Rho. In concert with RASIP1, suppresses RhoA signaling and dampens ROCK and MYH9 activities in endothelial cells and plays an essential role in blood vessel tubulogenesis. This chain is Rho GTPase-activating protein 29 (ARHGAP29), found in Bos taurus (Bovine).